Reading from the N-terminus, the 465-residue chain is MIKREFLPESAELKIKLTADSKKWAEFYQKAEQKQAAKVSLRGFRKGKVPLEKARAYLNPQAVFELALRMFLPELEKQAATNIIDSDNVIESPIFNIVNMDKNNLEIEFLYPVYPEIKLPDYKNLKTKFAIKKITKEDIELQKQKLLEAKGRFIEVNRPVKIGDVINFNFKGFIDDEPFDGGEGENFDLRIGSNSFIAGFEEQLVGLEIKKEADIYVTFPENYQVHTYANKKARFRVKINKIKENQPAKLTNEFVASLKIQNVETISQLEVYLENLTERENIERAKIDFQKNALTEIGEQVEVPLAKKLINLEIERLNEVFHSTLKQQEIPLKEYLKITKFTEKDIYDQFEVEAKKLLKNSFIFAEIAKLEGLVPTQQEYESHVEKLAKFTGKSVQEISETVSYNEIQINITNQKVIDKLIEFNHETKDEEIVNKNQNDNEIEQDKEQKDNNEEKIKQENNLENK.

One can recognise a PPIase FKBP-type domain in the interval 163-248; it reads GDVINFNFKG…INKIKENQPA (86 aa). Residues 431–465 form a disordered region; that stretch reads EIVNKNQNDNEIEQDKEQKDNNEEKIKQENNLENK. Residues 443–465 are compositionally biased toward basic and acidic residues; it reads EQDKEQKDNNEEKIKQENNLENK.

This sequence belongs to the FKBP-type PPIase family. Tig subfamily.

It localises to the cytoplasm. The catalysed reaction is [protein]-peptidylproline (omega=180) = [protein]-peptidylproline (omega=0). Functionally, involved in protein export. Acts as a chaperone by maintaining the newly synthesized protein in an open conformation. Functions as a peptidyl-prolyl cis-trans isomerase. This Mesomycoplasma hyopneumoniae (strain 232) (Mycoplasma hyopneumoniae) protein is Trigger factor.